The following is a 172-amino-acid chain: Shikimate kinase (172 aa).

Gly11–Thr16 is an ATP binding site. Ser15 serves as a coordination point for Mg(2+). Substrate-binding residues include Asp33, Arg57, and Gly80. Position 120 (Arg120) interacts with ATP. Arg142 is a substrate binding site. Residue Arg158 participates in ATP binding.

It belongs to the shikimate kinase family. Monomer. Requires Mg(2+) as cofactor.

It localises to the cytoplasm. It catalyses the reaction shikimate + ATP = 3-phosphoshikimate + ADP + H(+). It participates in metabolic intermediate biosynthesis; chorismate biosynthesis; chorismate from D-erythrose 4-phosphate and phosphoenolpyruvate: step 5/7. Functionally, catalyzes the specific phosphorylation of the 3-hydroxyl group of shikimic acid using ATP as a cosubstrate. The chain is Shikimate kinase from Flavobacterium johnsoniae (strain ATCC 17061 / DSM 2064 / JCM 8514 / BCRC 14874 / CCUG 350202 / NBRC 14942 / NCIMB 11054 / UW101) (Cytophaga johnsonae).